A 411-amino-acid chain; its full sequence is Dual-specificity RNA methyltransferase RlmN (411 aa).

Residue Glu-124 is the Proton acceptor of the active site. The Radical SAM core domain maps to 130–379; the sequence is EEGRGTLCIS…IRTPRGRDIL (250 aa). An intrachain disulfide couples Cys-137 to Cys-382. [4Fe-4S] cluster-binding residues include Cys-144, Cys-148, and Cys-151. S-adenosyl-L-methionine contacts are provided by residues 208-209, Ser-240, 262-264, and Asn-339; these read GE and SLH. Cys-382 acts as the S-methylcysteine intermediate in catalysis.

The protein belongs to the radical SAM superfamily. RlmN family. It depends on [4Fe-4S] cluster as a cofactor.

It is found in the cytoplasm. It catalyses the reaction adenosine(2503) in 23S rRNA + 2 reduced [2Fe-2S]-[ferredoxin] + 2 S-adenosyl-L-methionine = 2-methyladenosine(2503) in 23S rRNA + 5'-deoxyadenosine + L-methionine + 2 oxidized [2Fe-2S]-[ferredoxin] + S-adenosyl-L-homocysteine. It carries out the reaction adenosine(37) in tRNA + 2 reduced [2Fe-2S]-[ferredoxin] + 2 S-adenosyl-L-methionine = 2-methyladenosine(37) in tRNA + 5'-deoxyadenosine + L-methionine + 2 oxidized [2Fe-2S]-[ferredoxin] + S-adenosyl-L-homocysteine. Specifically methylates position 2 of adenine 2503 in 23S rRNA and position 2 of adenine 37 in tRNAs. m2A2503 modification seems to play a crucial role in the proofreading step occurring at the peptidyl transferase center and thus would serve to optimize ribosomal fidelity. The sequence is that of Dual-specificity RNA methyltransferase RlmN from Rhizobium meliloti (strain 1021) (Ensifer meliloti).